Here is a 598-residue protein sequence, read N- to C-terminus: Elongation factor 4 (598 aa).

The tr-type G domain maps to 2 to 184 (KNIRNFSIIA…RLVKEIPAPE (183 aa)). GTP contacts are provided by residues 14 to 19 (DHGKST) and 131 to 134 (NKID).

This sequence belongs to the TRAFAC class translation factor GTPase superfamily. Classic translation factor GTPase family. LepA subfamily.

Its subcellular location is the cell inner membrane. It carries out the reaction GTP + H2O = GDP + phosphate + H(+). Its function is as follows. Required for accurate and efficient protein synthesis under certain stress conditions. May act as a fidelity factor of the translation reaction, by catalyzing a one-codon backward translocation of tRNAs on improperly translocated ribosomes. Back-translocation proceeds from a post-translocation (POST) complex to a pre-translocation (PRE) complex, thus giving elongation factor G a second chance to translocate the tRNAs correctly. Binds to ribosomes in a GTP-dependent manner. This is Elongation factor 4 from Proteus mirabilis (strain HI4320).